Consider the following 506-residue polypeptide: Maturase K (506 aa).

This sequence belongs to the intron maturase 2 family. MatK subfamily.

Its subcellular location is the plastid. The protein resides in the chloroplast. In terms of biological role, usually encoded in the trnK tRNA gene intron. Probably assists in splicing its own and other chloroplast group II introns. This is Maturase K from Jasminum nudiflorum (Winter jasmine).